The sequence spans 219 residues: 7-cyano-7-deazaguanine synthase (219 aa).

10-20 is a binding site for ATP; the sequence is FSGGQDSTTCL. 4 residues coordinate Zn(2+): Cys188, Cys196, Cys199, and Cys202.

It belongs to the QueC family. Zn(2+) is required as a cofactor.

It carries out the reaction 7-carboxy-7-deazaguanine + NH4(+) + ATP = 7-cyano-7-deazaguanine + ADP + phosphate + H2O + H(+). It participates in purine metabolism; 7-cyano-7-deazaguanine biosynthesis. Functionally, catalyzes the ATP-dependent conversion of 7-carboxy-7-deazaguanine (CDG) to 7-cyano-7-deazaguanine (preQ(0)). This is 7-cyano-7-deazaguanine synthase from Neisseria meningitidis serogroup B (strain ATCC BAA-335 / MC58).